Here is a 187-residue protein sequence, read N- to C-terminus: UPF0301 protein VS_2679 (187 aa).

The protein belongs to the UPF0301 (AlgH) family.

This Vibrio atlanticus (strain LGP32) (Vibrio splendidus (strain Mel32)) protein is UPF0301 protein VS_2679.